A 456-amino-acid polypeptide reads, in one-letter code: tRNA modification GTPase MnmE (456 aa).

(6S)-5-formyl-5,6,7,8-tetrahydrofolate contacts are provided by Arg24, Glu81, and Lys120. Positions 216–379 constitute a TrmE-type G domain; that stretch reads GMTVVIAGRP…LRDHLKGCMG (164 aa). Asn226 serves as a coordination point for K(+). Residues 226-231, 245-251, 270-273, and 335-338 each bind GTP; these read NAGKSS, TDIAGTT, DTAG, and NKAD. Ser230 serves as a coordination point for Mg(2+). K(+) contacts are provided by Thr245, Ile247, and Thr250. Thr251 serves as a coordination point for Mg(2+). Residue Lys456 coordinates (6S)-5-formyl-5,6,7,8-tetrahydrofolate.

This sequence belongs to the TRAFAC class TrmE-Era-EngA-EngB-Septin-like GTPase superfamily. TrmE GTPase family. As to quaternary structure, homodimer. Heterotetramer of two MnmE and two MnmG subunits. K(+) serves as cofactor.

The protein localises to the cytoplasm. Its function is as follows. Exhibits a very high intrinsic GTPase hydrolysis rate. Involved in the addition of a carboxymethylaminomethyl (cmnm) group at the wobble position (U34) of certain tRNAs, forming tRNA-cmnm(5)s(2)U34. The polypeptide is tRNA modification GTPase MnmE (Pseudomonas putida (strain ATCC 47054 / DSM 6125 / CFBP 8728 / NCIMB 11950 / KT2440)).